We begin with the raw amino-acid sequence, 394 residues long: Mannosyl-3-phosphoglycerate synthase (394 aa).

The protein belongs to the glycosyltransferase 2 family.

It localises to the cytoplasm. It carries out the reaction (2R)-3-phosphoglycerate + GDP-alpha-D-mannose = 2-O-(alpha-D-mannosyl)-3-phosphoglycerate + GDP + H(+). The protein operates within carbohydrate biosynthesis; 2-(alpha-D-mannosyl)-D-glycerate biosynthesis; 2-(alpha-D-mannosyl)-D-glycerate from GDP-alpha-D-mannose (MPG route): step 1/2. In terms of biological role, transfers a mannosyl group from GDP-mannose to phosphoglycerate to form mannosyl-3-phosphoglycerate (MPG). The polypeptide is Mannosyl-3-phosphoglycerate synthase (mngA) (Pyrococcus abyssi (strain GE5 / Orsay)).